The primary structure comprises 366 residues: D-alanine--D-alanine ligase (366 aa).

Residues 149–358 form the ATP-grasp domain; the sequence is KIAFDHAGLP…FSELVDTLIQ (210 aa). 185 to 240 contributes to the ATP binding site; that stretch reads ETTLEYPCFVKPANLGSSVGIAKVRSRSELETALDNAASYDRRIIVEAGVEAKELE. Mg(2+) contacts are provided by Asp-311, Glu-325, and Asn-327.

The protein belongs to the D-alanine--D-alanine ligase family. It depends on Mg(2+) as a cofactor. Requires Mn(2+) as cofactor.

It localises to the cytoplasm. The catalysed reaction is 2 D-alanine + ATP = D-alanyl-D-alanine + ADP + phosphate + H(+). It participates in cell wall biogenesis; peptidoglycan biosynthesis. In terms of biological role, cell wall formation. This is D-alanine--D-alanine ligase from Trichodesmium erythraeum (strain IMS101).